A 218-amino-acid polypeptide reads, in one-letter code: Glutathione S-transferase D7 (218 aa).

Residues 1-82 enclose the GST N-terminal domain; that stretch reads MTPVLYYLPP…YLVSAYGKDE (82 aa). Glutathione-binding positions include serine 11, 52 to 54, and 66 to 68; these read HCI and ESR. Residues 88–207 form the GST C-terminal domain; that stretch reads DFRSRAIVDQ…KEINETGAET (120 aa).

The protein belongs to the GST superfamily. Theta family. In terms of assembly, homodimer.

It carries out the reaction RX + glutathione = an S-substituted glutathione + a halide anion + H(+). In terms of biological role, conjugation of reduced glutathione to a wide number of exogenous and endogenous hydrophobic electrophiles. In Anopheles gambiae (African malaria mosquito), this protein is Glutathione S-transferase D7.